The following is a 359-amino-acid chain: Protein Wnt-9b (359 aa).

A signal peptide spans 1-23 (MRPAPALALAALCLLVLPAAAAA). Cystine bridges form between C91/C102, C137/C145, C147/C164, C212/C226, C214/C221, C293/C318, C307/C313, C317/C357, C333/C348, C335/C345, and C340/C341. N101 is a glycosylation site (N-linked (GlcNAc...) asparagine). S218 carries the O-palmitoleoyl serine; by PORCN lipid modification.

Belongs to the Wnt family. In terms of assembly, forms a soluble 1:1 complex with AFM; this prevents oligomerization and is required for prolonged biological activity. The complex with AFM may represent the physiological form in body fluids. Component of the Wnt-Fzd-LRP5-LRP6 signaling complex that contains a WNT protein, a FZD protein and LRP5 or LRP6. Interacts directly in the complex with LRP6. Interacts with PKD1 (via extracellular domain). In terms of processing, palmitoleoylation is required for efficient binding to frizzled receptors. Depalmitoleoylation leads to Wnt signaling pathway inhibition.

It localises to the secreted. Its subcellular location is the extracellular space. It is found in the extracellular matrix. Functionally, ligand for members of the frizzled family of seven transmembrane receptors. Functions in the canonical Wnt/beta-catenin signaling pathway. Required for normal embryonic kidney development, and for normal development of the urogenital tract, including uterus and part of the oviduct and the upper vagina in females, and epididymis and vas deferens in males. Activates a signaling cascade in the metanephric mesenchyme that induces tubulogenesis. Acts upstream of WNT4 in the signaling pathways that mediate development of kidney tubules and the Muellerian ducts. Plays a role in cranofacial development and is required for normal fusion of the palate during embryonic development. This Mus musculus (Mouse) protein is Protein Wnt-9b (Wnt9b).